The sequence spans 204 residues: Quinol oxidase subunit 3 (204 aa).

6 helical membrane-spanning segments follow: residues 27-47 (FWIFLGAEIVLFSTLFATFFV), 66-86 (LVMIMTFLLLISSFTCGIAVH), 95-115 (GVVIWTIITLLLGAGFVGCEI), 118-138 (FVHYVHEGAALSTSAFWSGFF), 140-160 (LLGTHGTHVTIGIFWITGILI), and 184-204 (FLDVVWIFIFTGVYLMGLGGL).

Belongs to the cytochrome c oxidase subunit 3 family.

It is found in the cell membrane. It carries out the reaction 2 a quinol + O2 = 2 a quinone + 2 H2O. Catalyzes quinol oxidation with the concomitant reduction of oxygen to water. Major component for energy conversion during vegetative growth. This chain is Quinol oxidase subunit 3 (qoxC), found in Bacillus subtilis (strain 168).